Reading from the N-terminus, the 543-residue chain is CTP synthase (543 aa).

The tract at residues 1 to 266 is amidoligase domain; the sequence is MKTNYIFVTG…DDYICERFSL (266 aa). Ser14 provides a ligand contact to CTP. UTP is bound at residue Ser14. Residues 15–20 and Asp72 contribute to the ATP site; that span reads SLGKGI. Mg(2+) contacts are provided by Asp72 and Glu140. Residues 147-149, 187-192, and Lys223 each bind CTP; these read DIE and KTKPTQ. Residues 187–192 and Lys223 each bind UTP; that span reads KTKPTQ. ATP is bound at residue 239 to 241; the sequence is KDV. The region spanning 291–538 is the Glutamine amidotransferase type-1 domain; the sequence is TVGIVGKYID…IKAASEYQKK (248 aa). L-glutamine is bound at residue Gly352. The Nucleophile; for glutamine hydrolysis role is filled by Cys379. Residues 380 to 383, Glu403, and Arg466 contribute to the L-glutamine site; that span reads LGMQ. Residues His511 and Glu513 contribute to the active site.

Belongs to the CTP synthase family. In terms of assembly, homotetramer.

The enzyme catalyses UTP + L-glutamine + ATP + H2O = CTP + L-glutamate + ADP + phosphate + 2 H(+). The catalysed reaction is L-glutamine + H2O = L-glutamate + NH4(+). It carries out the reaction UTP + NH4(+) + ATP = CTP + ADP + phosphate + 2 H(+). It functions in the pathway pyrimidine metabolism; CTP biosynthesis via de novo pathway; CTP from UDP: step 2/2. With respect to regulation, allosterically activated by GTP, when glutamine is the substrate; GTP has no effect on the reaction when ammonia is the substrate. The allosteric effector GTP functions by stabilizing the protein conformation that binds the tetrahedral intermediate(s) formed during glutamine hydrolysis. Inhibited by the product CTP, via allosteric rather than competitive inhibition. Its function is as follows. Catalyzes the ATP-dependent amination of UTP to CTP with either L-glutamine or ammonia as the source of nitrogen. Regulates intracellular CTP levels through interactions with the four ribonucleotide triphosphates. The polypeptide is CTP synthase (Baumannia cicadellinicola subsp. Homalodisca coagulata).